A 160-amino-acid chain; its full sequence is Phosphopantetheine adenylyltransferase (160 aa).

Residue Thr9 participates in substrate binding. ATP contacts are provided by residues 9–10 (TF) and His17. Substrate-binding residues include Lys41, Leu73, and Arg87. Residues 88 to 90 (GLR), Glu98, and 123 to 129 (YSFLSSS) each bind ATP.

This sequence belongs to the bacterial CoaD family. In terms of assembly, homohexamer. Mg(2+) serves as cofactor.

Its subcellular location is the cytoplasm. The enzyme catalyses (R)-4'-phosphopantetheine + ATP + H(+) = 3'-dephospho-CoA + diphosphate. It functions in the pathway cofactor biosynthesis; coenzyme A biosynthesis; CoA from (R)-pantothenate: step 4/5. Functionally, reversibly transfers an adenylyl group from ATP to 4'-phosphopantetheine, yielding dephospho-CoA (dPCoA) and pyrophosphate. This Moorella thermoacetica (strain ATCC 39073 / JCM 9320) protein is Phosphopantetheine adenylyltransferase.